A 428-amino-acid chain; its full sequence is AP2-like ethylene-responsive transcription factor At2g41710 (428 aa).

A compositionally biased stretch (polar residues) spans 1-10; it reads MASVSSSDQG. The interval 1-28 is disordered; that stretch reads MASVSSSDQGPKTEAGCSGGGGGESSET. The segment at residues 70–136 is a DNA-binding region (AP2/ERF); it reads IYRGVTRHRW…WGPGTLINFP (67 aa).

It belongs to the AP2/ERF transcription factor family. AP2 subfamily.

The protein localises to the nucleus. Probably acts as a transcriptional activator. Binds to the GCC-box pathogenesis-related promoter element. May be involved in the regulation of gene expression by stress factors and by components of stress signal transduction pathways. The protein is AP2-like ethylene-responsive transcription factor At2g41710 of Arabidopsis thaliana (Mouse-ear cress).